The sequence spans 569 residues: Urease subunit beta (569 aa).

In terms of domain architecture, Urease spans 131-569 (GGIDTHIHFI…LSLAQLYNLF (439 aa)). The Ni(2+) site is built by His136, His138, and Lys219. Position 219 is an N6-carboxylysine (Lys219). Substrate is bound at residue His221. Ni(2+)-binding residues include His248 and His274. His322 (proton donor) is an active-site residue. Asp362 contributes to the Ni(2+) binding site.

The protein belongs to the metallo-dependent hydrolases superfamily. Urease alpha subunit family. As to quaternary structure, heterohexamer of 3 UreA (alpha) and 3 UreB (beta) subunits. Ni cation serves as cofactor. In terms of processing, carboxylation allows a single lysine to coordinate two nickel ions.

The protein localises to the cytoplasm. The enzyme catalyses urea + 2 H2O + H(+) = hydrogencarbonate + 2 NH4(+). Its pathway is nitrogen metabolism; urea degradation; CO(2) and NH(3) from urea (urease route): step 1/1. The chain is Urease subunit beta from Helicobacter felis (strain ATCC 49179 / CCUG 28539 / NCTC 12436 / CS1).